The primary structure comprises 313 residues: MKTLLLLIPLVLTACGTLTGIPAHGGGKRFAVEQELVAASSRAAVKEMDLSALKGRKAALYVSVMGDQGSGNISGGRYSIDALIRGGYHNNPESATQYSYPAYDTTATTKADALSSVTTSTSLLNAPAAALTKNSGRKGERSAGLSVNGTGDYRNETLLANPRDVSFLTNLIQTVFYLRGIEVVPPEYADTDVFVTVDVFGIVRSRTELHLYNAETLKAQTKLEYFAVDRDSRKLLIAPKTAAYESQYQEQYALWMGPYSVGKTVKASDRLMVDFSDITPYGDTTAQNRPDFKQNNGKNPDVGNEVIRRRKGG.

The N-terminal stretch at 1-14 (MKTLLLLIPLVLTA) is a signal peptide. C15 carries N-palmitoyl cysteine lipidation. C15 carries the S-diacylglycerol cysteine lipid modification. Over residues 282-298 (GDTTAQNRPDFKQNNGK) the composition is skewed to polar residues. The tract at residues 282–313 (GDTTAQNRPDFKQNNGKNPDVGNEVIRRRKGG) is disordered.

Belongs to the MafA family.

It localises to the cell outer membrane. This Neisseria meningitidis serogroup C (strain 053442) protein is Adhesin MafA 1/2 (mafA1).